The following is a 106-amino-acid chain: Large ribosomal subunit protein bL21 (106 aa).

It belongs to the bacterial ribosomal protein bL21 family. In terms of assembly, part of the 50S ribosomal subunit. Contacts protein L20.

Functionally, this protein binds to 23S rRNA in the presence of protein L20. This Streptomyces griseus subsp. griseus (strain JCM 4626 / CBS 651.72 / NBRC 13350 / KCC S-0626 / ISP 5235) protein is Large ribosomal subunit protein bL21.